A 385-amino-acid polypeptide reads, in one-letter code: uncharacterized protein (385 aa).

The protein belongs to the phage portal family. HK97 subfamily.

This is an uncharacterized protein from Rickettsia felis (strain ATCC VR-1525 / URRWXCal2) (Rickettsia azadi).